A 110-amino-acid chain; its full sequence is MKKTLSVLFTAFSFCVIGFTQVAFAADLDNGEKVFSANCAACHAGGNNAIMPDKTLKKDVLEANSMNGIDAITYQVTNGKNAMPAFGGRLVDEDIEDAANYVLSQSEKGW.

The first 25 residues, 1 to 25 (MKKTLSVLFTAFSFCVIGFTQVAFA), serve as a signal peptide directing secretion. 4 residues coordinate heme c: cysteine 39, cysteine 42, histidine 43, and methionine 83.

The protein belongs to the cytochrome c family. PetJ subfamily. Monomer. Binds 1 heme c group covalently per subunit.

It is found in the plastid. The protein resides in the chloroplast thylakoid lumen. Its function is as follows. Functions as an electron carrier between membrane-bound cytochrome b6-f and photosystem I in oxygenic photosynthesis. The protein is Cytochrome c6 (petJ) of Porphyra purpurea (Red seaweed).